The chain runs to 123 residues: MADLAKIVEDLSNLTVLEAAELSKLLEEKWGVSAAAPVAVAAVGSAAAPAAEEKTEFDVVLVDGGAQKINVIKEVRALTGLGLKEAKDLVEGAPKPIKEGVSKDEAEKIKAQLEAAGAKIELK.

It belongs to the bacterial ribosomal protein bL12 family. Homodimer. Part of the ribosomal stalk of the 50S ribosomal subunit. Forms a multimeric L10(L12)X complex, where L10 forms an elongated spine to which 2 to 4 L12 dimers bind in a sequential fashion. Binds GTP-bound translation factors.

Forms part of the ribosomal stalk which helps the ribosome interact with GTP-bound translation factors. Is thus essential for accurate translation. This is Large ribosomal subunit protein bL12 from Bartonella bacilliformis (strain ATCC 35685 / KC583 / Herrer 020/F12,63).